A 258-amino-acid polypeptide reads, in one-letter code: Probable S-methyl-5'-thioinosine phosphorylase (258 aa).

Arginine 53–histidine 54 contacts phosphate. Methionine 180 lines the substrate pocket. Threonine 181 contacts phosphate. A substrate-binding site is contributed by asparagine 204 to alanine 206.

It belongs to the PNP/MTAP phosphorylase family. MTAP subfamily. Homotrimer.

The enzyme catalyses S-methyl-5'-thioinosine + phosphate = 5-(methylsulfanyl)-alpha-D-ribose 1-phosphate + hypoxanthine. The protein operates within purine metabolism; purine nucleoside salvage. Functionally, catalyzes the reversible phosphorylation of S-methyl-5'-thioinosine (MTI) to hypoxanthine and 5-methylthioribose-1-phosphate. Involved in the breakdown of S-methyl-5'-thioadenosine (MTA), a major by-product of polyamine biosynthesis. Catabolism of (MTA) occurs via deamination to MTI and phosphorolysis to hypoxanthine. This Methanosarcina acetivorans (strain ATCC 35395 / DSM 2834 / JCM 12185 / C2A) protein is Probable S-methyl-5'-thioinosine phosphorylase.